Here is a 408-residue protein sequence, read N- to C-terminus: Chaperonin GroEL (408 aa).

Residues 30-33 (TLGP), Lys-51, and 87-91 (DGTTT) contribute to the ATP site.

Belongs to the chaperonin (HSP60) family. Forms a cylinder of 14 subunits composed of two heptameric rings stacked back-to-back. Interacts with the co-chaperonin GroES.

It localises to the cytoplasm. The catalysed reaction is ATP + H2O + a folded polypeptide = ADP + phosphate + an unfolded polypeptide.. Its function is as follows. Together with its co-chaperonin GroES, plays an essential role in assisting protein folding. The GroEL-GroES system forms a nano-cage that allows encapsulation of the non-native substrate proteins and provides a physical environment optimized to promote and accelerate protein folding. The polypeptide is Chaperonin GroEL (Rickettsia rickettsii).